Consider the following 559-residue polypeptide: Formate--tetrahydrofolate ligase (559 aa).

Residue 68–75 coordinates ATP; that stretch reads TPAGEGKT.

Belongs to the formate--tetrahydrofolate ligase family.

The enzyme catalyses (6S)-5,6,7,8-tetrahydrofolate + formate + ATP = (6R)-10-formyltetrahydrofolate + ADP + phosphate. It participates in one-carbon metabolism; tetrahydrofolate interconversion. The chain is Formate--tetrahydrofolate ligase from Rhizobium meliloti (strain 1021) (Ensifer meliloti).